Reading from the N-terminus, the 356-residue chain is Phosphate acyltransferase (356 aa).

Belongs to the PlsX family. Homodimer. Probably interacts with PlsY.

It is found in the cytoplasm. The enzyme catalyses a fatty acyl-[ACP] + phosphate = an acyl phosphate + holo-[ACP]. The protein operates within lipid metabolism; phospholipid metabolism. In terms of biological role, catalyzes the reversible formation of acyl-phosphate (acyl-PO(4)) from acyl-[acyl-carrier-protein] (acyl-ACP). This enzyme utilizes acyl-ACP as fatty acyl donor, but not acyl-CoA. The chain is Phosphate acyltransferase from Stutzerimonas stutzeri (strain A1501) (Pseudomonas stutzeri).